Reading from the N-terminus, the 37-residue chain is Cytochrome b6-f complex subunit 7 (37 aa).

The chain crosses the membrane as a helical span at residues 11–29 (AVILMVLVLFGLAWGFLIL).

The protein belongs to the PetM family. The 4 large subunits of the cytochrome b6-f complex are cytochrome b6, subunit IV (17 kDa polypeptide, PetD), cytochrome f and the Rieske protein, while the 4 small subunits are PetG, PetL, PetM and PetN. The complex functions as a dimer.

The protein resides in the cellular thylakoid membrane. Functionally, component of the cytochrome b6-f complex, which mediates electron transfer between photosystem II (PSII) and photosystem I (PSI), cyclic electron flow around PSI, and state transitions. This is Cytochrome b6-f complex subunit 7 from Crocosphaera subtropica (strain ATCC 51142 / BH68) (Cyanothece sp. (strain ATCC 51142)).